The primary structure comprises 357 residues: Peptide chain release factor 1 (357 aa).

Gln-233 bears the N5-methylglutamine mark.

This sequence belongs to the prokaryotic/mitochondrial release factor family. Post-translationally, methylated by PrmC. Methylation increases the termination efficiency of RF1.

It is found in the cytoplasm. Functionally, peptide chain release factor 1 directs the termination of translation in response to the peptide chain termination codons UAG and UAA. This is Peptide chain release factor 1 from Leuconostoc citreum (strain KM20).